The chain runs to 251 residues: Flap endonuclease Xni (251 aa).

Mg(2+) is bound at residue D104. In terms of domain architecture, 5'-3' exonuclease spans 160 to 249 (VLPRQLPDYW…IDGNLQQLRL (90 aa)). K(+) contacts are provided by L171, A172, P180, V182, and I185. An interaction with DNA region spans residues 184 to 189 (GIGPKS).

It belongs to the Xni family. The cofactor is Mg(2+). Requires K(+) as cofactor.

Functionally, has flap endonuclease activity. During DNA replication, flap endonucleases cleave the 5'-overhanging flap structure that is generated by displacement synthesis when DNA polymerase encounters the 5'-end of a downstream Okazaki fragment. The polypeptide is Flap endonuclease Xni (Salmonella newport (strain SL254)).